The primary structure comprises 167 residues: NAD(P)H-quinone oxidoreductase subunit J (167 aa).

Belongs to the complex I 30 kDa subunit family. NDH-1 can be composed of about 15 different subunits; different subcomplexes with different compositions have been identified which probably have different functions.

It localises to the cellular thylakoid membrane. The catalysed reaction is a plastoquinone + NADH + (n+1) H(+)(in) = a plastoquinol + NAD(+) + n H(+)(out). It carries out the reaction a plastoquinone + NADPH + (n+1) H(+)(in) = a plastoquinol + NADP(+) + n H(+)(out). Its function is as follows. NDH-1 shuttles electrons from an unknown electron donor, via FMN and iron-sulfur (Fe-S) centers, to quinones in the respiratory and/or the photosynthetic chain. The immediate electron acceptor for the enzyme in this species is believed to be plastoquinone. Couples the redox reaction to proton translocation, and thus conserves the redox energy in a proton gradient. Cyanobacterial NDH-1 also plays a role in inorganic carbon-concentration. This Trichodesmium erythraeum (strain IMS101) protein is NAD(P)H-quinone oxidoreductase subunit J.